Consider the following 425-residue polypeptide: Histidine--tRNA ligase (425 aa).

The protein belongs to the class-II aminoacyl-tRNA synthetase family. As to quaternary structure, homodimer.

The protein resides in the cytoplasm. The catalysed reaction is tRNA(His) + L-histidine + ATP = L-histidyl-tRNA(His) + AMP + diphosphate + H(+). The protein is Histidine--tRNA ligase of Listeria monocytogenes serotype 4b (strain F2365).